The primary structure comprises 431 residues: tRNA-2-methylthio-N(6)-dimethylallyladenosine synthase (431 aa).

In terms of domain architecture, MTTase N-terminal spans 2-117 (KKLFIETLGC…ITEVVDKKHA (116 aa)). 6 residues coordinate [4Fe-4S] cluster: C11, C48, C80, C149, C153, and C156. The 234-residue stretch at 135–368 (RTNPFKAMVN…QTRHTEILDE (234 aa)) folds into the Radical SAM core domain. The TRAM domain occupies 371–431 (DAQLGKVHEV…SRGALDGVLV (61 aa)).

This sequence belongs to the methylthiotransferase family. MiaB subfamily. In terms of assembly, monomer. The cofactor is [4Fe-4S] cluster.

It is found in the cytoplasm. It carries out the reaction N(6)-dimethylallyladenosine(37) in tRNA + (sulfur carrier)-SH + AH2 + 2 S-adenosyl-L-methionine = 2-methylsulfanyl-N(6)-dimethylallyladenosine(37) in tRNA + (sulfur carrier)-H + 5'-deoxyadenosine + L-methionine + A + S-adenosyl-L-homocysteine + 2 H(+). Its function is as follows. Catalyzes the methylthiolation of N6-(dimethylallyl)adenosine (i(6)A), leading to the formation of 2-methylthio-N6-(dimethylallyl)adenosine (ms(2)i(6)A) at position 37 in tRNAs that read codons beginning with uridine. The sequence is that of tRNA-2-methylthio-N(6)-dimethylallyladenosine synthase from Sulfurovum sp. (strain NBC37-1).